The chain runs to 286 residues: Pantothenate synthetase (286 aa).

30 to 37 provides a ligand contact to ATP; the sequence is MGNLHDGH. The active-site Proton donor is His37. Gln61 contacts (R)-pantoate. Gln61 lines the beta-alanine pocket. 149-152 is an ATP binding site; the sequence is GEKD. Position 155 (Gln155) interacts with (R)-pantoate. Residues Val178 and 186–189 each bind ATP; that span reads LSSR.

Belongs to the pantothenate synthetase family. Homodimer.

The protein resides in the cytoplasm. The catalysed reaction is (R)-pantoate + beta-alanine + ATP = (R)-pantothenate + AMP + diphosphate + H(+). It functions in the pathway cofactor biosynthesis; (R)-pantothenate biosynthesis; (R)-pantothenate from (R)-pantoate and beta-alanine: step 1/1. Its function is as follows. Catalyzes the condensation of pantoate with beta-alanine in an ATP-dependent reaction via a pantoyl-adenylate intermediate. The protein is Pantothenate synthetase of Edwardsiella ictaluri (strain 93-146).